Consider the following 222-residue polypeptide: Charged multivesicular body protein 4b (222 aa).

2 disordered regions span residues 1 to 21 (MSLIGKLFGTGGKGAKGPSPQ) and 183 to 222 (GPETVPLPNVPAAVLPAKPVKKKQEEDDDDMRELENWATA). Residues 21 to 182 (QEAIQKLRDT…ELDKNLLEVQ (162 aa)) adopt a coiled-coil conformation. The span at 188 to 200 (PLPNVPAAVLPAK) shows a compositional bias: low complexity.

Belongs to the SNF7 family. In terms of assembly, probable core component of the endosomal sorting required for transport complex III (ESCRT-III). ESCRT-III components are thought to multimerize to form a flat lattice on the perimeter membrane of the endosome.

It localises to the cytoplasm. The protein localises to the cytosol. It is found in the late endosome membrane. Its subcellular location is the midbody. Probable core component of the endosomal sorting required for transport complex III (ESCRT-III) which is involved in multivesicular bodies (MVBs) formation and sorting of endosomal cargo proteins into MVBs. MVBs contain intraluminal vesicles (ILVs) that are generated by invagination and scission from the limiting membrane of the endosome and mostly are delivered to lysosomes enabling degradation of membrane proteins, such as stimulated growth factor receptors, lysosomal enzymes and lipids. The chain is Charged multivesicular body protein 4b (chmp4b) from Xenopus tropicalis (Western clawed frog).